Here is a 517-residue protein sequence, read N- to C-terminus: Xyloglucan galactosyltransferase XLT2 (517 aa).

The disordered stretch occupies residues 1-31 (MLPVSNPSSPEHLLKKSRTPDSTTSIDRKNS). Over 1 to 49 (MLPVSNPSSPEHLLKKSRTPDSTTSIDRKNSFNSLHSVGNRSSYIAASR) the chain is Cytoplasmic. The span at 20 to 31 (PDSTTSIDRKNS) shows a compositional bias: polar residues. The helical; Signal-anchor for type II membrane protein transmembrane segment at 50 to 70 (SHCTWLILSLLSLQLILFLTL) threads the bilayer. Topologically, residues 71-517 (RSIPFPHRHI…KEQEKWYKWR (447 aa)) are lumenal. Residues asparagine 250, asparagine 288, asparagine 377, and asparagine 449 are each glycosylated (N-linked (GlcNAc...) asparagine).

Belongs to the glycosyltransferase 47 family. In terms of assembly, interacts with CSLC4, FUT1, XXT2 and XXT5. Expressed in roots, hypocotyls, cotyledons, leaves, stems and flowers.

It localises to the golgi apparatus membrane. In terms of biological role, functions in xyloglucan synthesis by adding side chains to the xylosylated glucan backbone. Involved in galactosylating hemicellulose xyloglucan (XyG) at the second position of the XXXG motif to form XLXG. Associates with other xyloglucan-synthesizing enzymes to form multiprotein complexes for xyloglucan synthesis in the Golgi. This is Xyloglucan galactosyltransferase XLT2 from Arabidopsis thaliana (Mouse-ear cress).